The chain runs to 531 residues: GTPase Obg (531 aa).

The region spanning 2–159 is the Obg domain; that stretch reads ASFVDRVIVH…QEVELELKSI (158 aa). The region spanning 160 to 341 is the OBG-type G domain; the sequence is ADIALVGFPS…LSFAMAALVS (182 aa). Residues 166–173, 191–195, 212–215, 293–296, and 322–324 each bind GTP; these read GFPSAGKS, FTTLV, DVPG, NKVD, and STA. Mg(2+) is bound by residues serine 173 and threonine 193. Residues 346-365 form a disordered region; sequence QEEQREQQRQTVPVLQPEPV. The OCT domain occupies 368-453; the sequence is RRGRDRREFV…ENGVVFDWEP (86 aa). The tract at residues 459-531 is disordered; that stretch reads AELLGGPRGS…TSETKETNEK (73 aa). Composition is skewed to basic and acidic residues over residues 468–507 and 514–531; these read SDLRLEETSRPTRREKREQFYDRMDAKSEARAELEQERRA and VDARDRRRTSETKETNEK.

Belongs to the TRAFAC class OBG-HflX-like GTPase superfamily. OBG GTPase family. In terms of assembly, monomer. Requires Mg(2+) as cofactor.

It localises to the cytoplasm. Functionally, an essential GTPase which binds GTP, GDP and possibly (p)ppGpp with moderate affinity, with high nucleotide exchange rates and a fairly low GTP hydrolysis rate. Plays a role in control of the cell cycle, stress response, ribosome biogenesis and in those bacteria that undergo differentiation, in morphogenesis control. The polypeptide is GTPase Obg (Kocuria rhizophila (strain ATCC 9341 / DSM 348 / NBRC 103217 / DC2201)).